Here is a 94-residue protein sequence, read N- to C-terminus: Large ribosomal subunit protein eL42 (94 aa).

Cysteine 11, cysteine 14, cysteine 71, and cysteine 74 together coordinate Zn(2+). A C4-type zinc finger spans residues 11-74 (CPFCKKHTIH…LDLRFRCTEC (64 aa)).

This sequence belongs to the eukaryotic ribosomal protein eL42 family. In terms of assembly, part of the 50S ribosomal subunit. Requires Zn(2+) as cofactor.

Its function is as follows. Binds to the 23S rRNA. This is Large ribosomal subunit protein eL42 from Pyrococcus furiosus (strain ATCC 43587 / DSM 3638 / JCM 8422 / Vc1).